A 473-amino-acid polypeptide reads, in one-letter code: Glutamate--tRNA ligase (473 aa).

Positions P11 to G21 match the 'HIGH' region motif. The 'KMSKS' region signature appears at K240–R244. ATP is bound at residue K243.

The protein belongs to the class-I aminoacyl-tRNA synthetase family. Glutamate--tRNA ligase type 1 subfamily. In terms of assembly, monomer.

It localises to the cytoplasm. The catalysed reaction is tRNA(Glu) + L-glutamate + ATP = L-glutamyl-tRNA(Glu) + AMP + diphosphate. Functionally, catalyzes the attachment of glutamate to tRNA(Glu) in a two-step reaction: glutamate is first activated by ATP to form Glu-AMP and then transferred to the acceptor end of tRNA(Glu). The polypeptide is Glutamate--tRNA ligase (Rhodopseudomonas palustris (strain TIE-1)).